The sequence spans 177 residues: Peptide methionine sulfoxide reductase MsrA (177 aa).

The active site involves cysteine 12.

This sequence belongs to the MsrA Met sulfoxide reductase family.

It catalyses the reaction L-methionyl-[protein] + [thioredoxin]-disulfide + H2O = L-methionyl-(S)-S-oxide-[protein] + [thioredoxin]-dithiol. The catalysed reaction is [thioredoxin]-disulfide + L-methionine + H2O = L-methionine (S)-S-oxide + [thioredoxin]-dithiol. In terms of biological role, has an important function as a repair enzyme for proteins that have been inactivated by oxidation. Catalyzes the reversible oxidation-reduction of methionine sulfoxide in proteins to methionine. This chain is Peptide methionine sulfoxide reductase MsrA, found in Halobacterium salinarum (strain ATCC 29341 / DSM 671 / R1).